Reading from the N-terminus, the 792-residue chain is Type 2 topoisomerase subunit B (792 aa).

A Toprim domain is found at 423 to 537 (CEIFLVEGDS…EGYVYIAEPP (115 aa)). Mg(2+) is bound by residues E429, D502, and D504.

The protein belongs to the type II topoisomerase GyrB family. Heterotetramer, composed of two GyrA and two GyrB chains. In the heterotetramer, 'GyrA' contains the active site tyrosine that forms a transient covalent intermediate with DNA, while 'GyrB' binds cofactors and catalyzes ATP hydrolysis. It depends on Mg(2+) as a cofactor. The cofactor is Mn(2+). Ca(2+) serves as cofactor.

The protein localises to the cytoplasm. It catalyses the reaction ATP-dependent breakage, passage and rejoining of double-stranded DNA.. Functionally, a type II topoisomerase. Despite its similarity to DNA gyrase, this enzyme is not able to supercoil DNA, and instead acts like topoisomerase IV. Relaxes both positively and negatively supercoiled DNA in an ATP-dependent fashion, decatenates interlocked circles. If this subunit is reconstituted with GyrA from E.coli the hybrid enzyme supercoils relaxed plasmid DNA; if paired with E.coli ParC supercoiling is not restored. This the first bacteria shown to not contain DNA gyrase, although it has 2 copies of a reverse gyrase that introduces positive supercoils. Type II topoisomerases break and join 2 DNA strands simultaneously in an ATP-dependent manner. In Aquifex aeolicus (strain VF5), this protein is Type 2 topoisomerase subunit B.